The sequence spans 374 residues: Very late expression factor 1 (374 aa).

Residues 169–349 (AIDTILNFID…NFDESSSDEE (181 aa)) enclose the Tyr recombinase domain. Active-site residues include arginine 210, lysine 239, arginine 303, and histidine 326. The disordered stretch occupies residues 328 to 374 (SPASTKPYLNKYNFDESSSDEESGGNNRDSSTGSSANSSSLYYQTGD). Residue tyrosine 335 is the O-(3'-phospho-DNA)-tyrosine intermediate of the active site. Residues 357–367 (SSTGSSANSSS) show a composition bias toward low complexity.

It belongs to the 'phage' integrase family.

Involved in very late gene activation. This is Very late expression factor 1 (VLF-1) from Orgyia pseudotsugata (Douglas-fir tussock moth).